A 150-amino-acid polypeptide reads, in one-letter code: Large ribosomal subunit protein bL9 (150 aa).

This sequence belongs to the bacterial ribosomal protein bL9 family.

Binds to the 23S rRNA. This is Large ribosomal subunit protein bL9 from Hydrogenovibrio crunogenus (strain DSM 25203 / XCL-2) (Thiomicrospira crunogena).